Reading from the N-terminus, the 259-residue chain is MVVISIANQKGGVGKTTIALNLSFTLAEKGYDTLVIDLDPQFNLSFGILGMKLLDYADKNIGILLSKNSVKKKEIEESIIKINDKLDLIPSHLQLSAVEKMLVNAYAREMKLKNIINQIKENYDYIIIDNAPSLGLFLINSLVASDYIIIPCEPSYFSIAGVQLMLDTVEEIKESNLNPKLKVLGFIFNKYSKQSKIPQKRLEQLKQLYPNIPVIGVIPRTITVEKAEREGKPVFKFDANNPASVAFSELAEWVIENVK.

This sequence belongs to the ParA family.

This is an uncharacterized protein from Methanocaldococcus jannaschii (strain ATCC 43067 / DSM 2661 / JAL-1 / JCM 10045 / NBRC 100440) (Methanococcus jannaschii).